Here is a 323-residue protein sequence, read N- to C-terminus: tRNA U34 carboxymethyltransferase (323 aa).

Carboxy-S-adenosyl-L-methionine is bound by residues Lys-91, Trp-105, Lys-110, Gly-130, 152–154 (DPT), 181–182 (IE), Met-196, Tyr-200, and Arg-315.

Belongs to the class I-like SAM-binding methyltransferase superfamily. CmoB family. Homotetramer.

The catalysed reaction is carboxy-S-adenosyl-L-methionine + 5-hydroxyuridine(34) in tRNA = 5-carboxymethoxyuridine(34) in tRNA + S-adenosyl-L-homocysteine + H(+). Catalyzes carboxymethyl transfer from carboxy-S-adenosyl-L-methionine (Cx-SAM) to 5-hydroxyuridine (ho5U) to form 5-carboxymethoxyuridine (cmo5U) at position 34 in tRNAs. The polypeptide is tRNA U34 carboxymethyltransferase (Salmonella arizonae (strain ATCC BAA-731 / CDC346-86 / RSK2980)).